The sequence spans 761 residues: Ribonucleoside-diphosphate reductase 1 subunit alpha (761 aa).

The ATP-cone domain maps to 5 to 95 (LLVTKRDGRT…IFHLRKKAFG (91 aa)). Residues Lys-9, 15-21 (ERINLDK), Thr-55, and Lys-91 each bind ATP. Thr-209 contributes to the GDP binding site. Cys-225 and Cys-462 are oxidised to a cystine. DTTP contacts are provided by residues 232–234 (DSL), Arg-262, and Arg-269. Asn-437 is a binding site for GDP. Asn-437 acts as the Proton acceptor in catalysis. Cys-439 (cysteine radical intermediate) is an active-site residue. Residues Glu-441 and 623 to 625 (ETS) each bind GDP. Glu-441 (proton acceptor) is an active-site residue.

This sequence belongs to the ribonucleoside diphosphate reductase large chain family. In terms of assembly, tetramer of two alpha (R1) and two beta (R2) subunits. The B1 protein is a dimer of alpha subunits. A radical transfer pathway occurs between 'Tyr-122' of R2 and R1.

The enzyme catalyses a 2'-deoxyribonucleoside 5'-diphosphate + [thioredoxin]-disulfide + H2O = a ribonucleoside 5'-diphosphate + [thioredoxin]-dithiol. With respect to regulation, under complex allosteric control mediated by deoxynucleoside triphosphates and ATP binding to separate specificity and activation sites on the alpha subunit. The type of nucleotide bound at the specificity site determines substrate preference. It seems probable that ATP makes the enzyme reduce CDP and UDP, dGTP favors ADP reduction and dTTP favors GDP reduction. Stimulated by ATP and inhibited by dATP binding to the activity site. Functionally, provides the precursors necessary for DNA synthesis. Catalyzes the biosynthesis of deoxyribonucleotides from the corresponding ribonucleotides. R1 contains the binding sites for both substrates and allosteric effectors and carries out the actual reduction of the ribonucleotide. This chain is Ribonucleoside-diphosphate reductase 1 subunit alpha (nrdA), found in Salmonella typhimurium (strain LT2 / SGSC1412 / ATCC 700720).